Here is a 526-residue protein sequence, read N- to C-terminus: Microphthalmia-associated transcription factor (526 aa).

Serine 5 is subject to Phosphoserine; by MTOR. 2 disordered regions span residues 20-54 (EPKT…STMT) and 155-179 (VLSS…SAPN). Over residues 34–44 (SSSSAEHSGAS) the composition is skewed to low complexity. Serine 180 bears the Phosphoserine; by MAPK mark. Residues 224 to 291 (DDVIDDIISL…PANLPNIKRE (68 aa)) are transactivation. At serine 280 the chain carries Phosphoserine. A Glycyl lysine isopeptide (Lys-Gly) (interchain with G-Cter in SUMO) cross-link involves residue lysine 289. The 54-residue stretch at 311 to 364 (QKKDNHNLIERRRRFNINDRIKELGTLIPKSNDPDMRWNKGTILKASVDYIRKL) folds into the bHLH domain. Residues 355-401 (KASVDYIRKLQREQQRAKDLENRQKKLEHANRHLLLRVQELEMQARA) are a coiled coil. Positions 374–395 (LENRQKKLEHANRHLLLRVQEL) are leucine-zipper. Residues 401-431 (AHGLSLIPSTGLCSPDLVNRIIKQEPVLENC) are DNA-binding regulation. Serine 405 bears the Phosphoserine; by GSK3 mark. The residue at position 414 (serine 414) is a Phosphoserine. Residue lysine 423 forms a Glycyl lysine isopeptide (Lys-Gly) (interchain with G-Cter in SUMO) linkage. The residue at position 491 (serine 491) is a Phosphoserine. The interval 496 to 526 (TDPLLSSVSPGASKTSSRRSSMSAEETEHAC) is disordered. Positions 507–519 (ASKTSSRRSSMSA) are enriched in low complexity. The residue at position 516 (serine 516) is a Phosphoserine; by RPS6KA1.

This sequence belongs to the MiT/TFE family. Homodimer or heterodimer; dimerization is mediated via the coiled coil region. Efficient DNA binding requires dimerization with another bHLH protein. Binds DNA in the form of homodimer or heterodimer with either TFE3, TFEB or TFEC. Interacts with small GTPases Rag (RagA/RRAGA, RagB/RRAGB, RagC/RRAGC and/or RagD/RRAGD); promoting its recruitment to lysosomal membrane in the presence of nutrients. Interacts with KARS1. Identified in a complex with HINT1 and CTNNB1. Interacts with VSX2. In terms of processing, when nutrients are present, phosphorylation by MTOR at Ser-5 via non-canonical mTORC1 pathway promotes ubiquitination by the SCF(BTRC) complex, followed by degradation. Phosphorylation at Ser-405 significantly enhances the ability to bind the tyrosinase promoter. Phosphorylation by MARK3/cTAK1 at Ser-280 promotes association with 14-3-3/YWHA adapters and retention in the cytosol. Phosphorylated at Ser-180 and Ser-516 following KIT signaling, triggering a short live activation: Phosphorylation at Ser-180 and Ser-516 by MAPK and RPS6KA1, respectively, activate the transcription factor activity but also promote ubiquitination and subsequent degradation by the proteasome. Phosphorylated in response to blue light (415nm). Ubiquitinated by the SCF(BTRC) and SCF(FBXW11) complexes following phosphorylation ar Ser-5 by MTOR, leading to its degradation by the proteasome. Ubiquitinated following phosphorylation at Ser-180, leading to subsequent degradation by the proteasome. Deubiquitinated by USP13, preventing its degradation. As to expression, in the adult, expressed at high levels in the heart, skin, skeletal muscle, intestine, stomach, kidney, ovary, lung, spleen and brain. In the embryo, expressed in developing eye, ear, skin and heart. Isoform M is expressed in melanocytes and also in the embryonic and adult heart while isoform A and isoform H are more widely expressed.

The protein localises to the nucleus. It is found in the cytoplasm. It localises to the lysosome membrane. Transcription factor that acts as a master regulator of melanocyte survival and differentiation as well as melanosome biogenesis. Binds to M-boxes (5'-TCATGTG-3') and symmetrical DNA sequences (E-boxes) (5'-CACGTG-3') found in the promoter of pigmentation genes, such as tyrosinase (TYR). Involved in the cellular response to amino acid availability by acting downstream of MTOR: in the presence of nutrients, MITF phosphorylation by MTOR promotes its inactivation. Upon starvation or lysosomal stress, inhibition of MTOR induces MITF dephosphorylation, resulting in transcription factor activity. Plays an important role in melanocyte development by regulating the expression of tyrosinase (TYR) and tyrosinase-related protein 1 (TYRP1). Plays a critical role in the differentiation of various cell types, such as neural crest-derived melanocytes, mast cells, osteoclasts and optic cup-derived retinal pigment epithelium. The polypeptide is Microphthalmia-associated transcription factor (Mitf) (Mus musculus (Mouse)).